Reading from the N-terminus, the 81-residue chain is Small ribosomal subunit protein uS17 (81 aa).

This sequence belongs to the universal ribosomal protein uS17 family. Part of the 30S ribosomal subunit.

One of the primary rRNA binding proteins, it binds specifically to the 5'-end of 16S ribosomal RNA. This Methylocella silvestris (strain DSM 15510 / CIP 108128 / LMG 27833 / NCIMB 13906 / BL2) protein is Small ribosomal subunit protein uS17.